Reading from the N-terminus, the 235-residue chain is Class B acid phosphatase (235 aa).

A signal peptide spans 1 to 22; the sequence is MKNLLKLSAIAILAASAVSTFA. Aspartate 67 functions as the Nucleophile in the catalytic mechanism. Mg(2+) is bound by residues aspartate 67 and aspartate 69. The Proton donor role is filled by aspartate 69. Substrate-binding positions include 135–136 and lysine 175; that span reads TG. Aspartate 190 contributes to the Mg(2+) binding site.

The protein belongs to the class B bacterial acid phosphatase family. Homotetramer. The cofactor is Mg(2+).

Its subcellular location is the periplasm. The catalysed reaction is a phosphate monoester + H2O = an alcohol + phosphate. In terms of biological role, dephosphorylates several organic phosphate monoesters. Also has a phosphotransferase activity catalyzing the transfer of low-energy phosphate groups from organic phosphate monoesters to free hydroxyl groups of various organic compounds. The sequence is that of Class B acid phosphatase from Haemophilus parainfluenzae (strain T3T1).